The primary structure comprises 413 residues: MQAEIICTGSELLLGYVQNTNADYLGHELAALGIEVVLQITVGDDWKIMEQAVREALERVDLVITTGGLGPTTDDITKDVIAAVLGVPMVTDDESLAQMREYFARRGIEMPDIFIRQASFPYGSRIIPNHKGTAPGALIERDGKVIVIFPGPPRELRAMFETWVKPYLLEIPGRGEVLRTRVLKLTGIAEYAVQEILKELGDLVNPSLGYLAMPGEVHLRVNAHAVDPAEAERMVEELTEKVTGLVGEYVFAIDDEVPEKTVGDLLLRKGLTVSVAESCTAGMVAARFTDVPGSSRYFIGGVVAYDNDLKREVLGVPAEILDRYGAVSEQTAVAMAEGIRRLTGSDLGLAITGIAGPDGGTRAKPVGLVYVALASARETLCQRLLLPGVRKAVRIGTVNSSLRIVKSFLNRQA.

It belongs to the CinA family.

This is Putative competence-damage inducible protein from Desulforudis audaxviator (strain MP104C).